The following is a 510-amino-acid chain: Ninja-family protein mc410 (510 aa).

Disordered stretches follow at residues 1–179 (MDEN…RQIL), 323–414 (HPSH…PSEF), and 481–510 (RHAS…SAQS). 2 stretches are compositionally biased toward basic and acidic residues: residues 31-44 (SKVE…KVIN) and 103-146 (RPVE…DKTR). Positions 148–160 (SHISITTDEGSTA) are enriched in polar residues. Basic and acidic residues-rich tracts occupy residues 363-389 (RAME…EENV) and 397-406 (RAKDPPDQPR). The span at 485-496 (VEQTSQEPGTGV) shows a compositional bias: polar residues. A compositionally biased stretch (low complexity) spans 497–510 (SSFPSSNPAASAQS).

This sequence belongs to the Ninja family.

It is found in the nucleus. This is Ninja-family protein mc410 (MC410) from Nicotiana tabacum (Common tobacco).